The sequence spans 258 residues: Imidazole glycerol phosphate synthase subunit HisF (258 aa).

Catalysis depends on residues Asp11 and Asp130.

This sequence belongs to the HisA/HisF family. In terms of assembly, heterodimer of HisH and HisF.

The protein localises to the cytoplasm. It carries out the reaction 5-[(5-phospho-1-deoxy-D-ribulos-1-ylimino)methylamino]-1-(5-phospho-beta-D-ribosyl)imidazole-4-carboxamide + L-glutamine = D-erythro-1-(imidazol-4-yl)glycerol 3-phosphate + 5-amino-1-(5-phospho-beta-D-ribosyl)imidazole-4-carboxamide + L-glutamate + H(+). Its pathway is amino-acid biosynthesis; L-histidine biosynthesis; L-histidine from 5-phospho-alpha-D-ribose 1-diphosphate: step 5/9. Its function is as follows. IGPS catalyzes the conversion of PRFAR and glutamine to IGP, AICAR and glutamate. The HisF subunit catalyzes the cyclization activity that produces IGP and AICAR from PRFAR using the ammonia provided by the HisH subunit. In Xanthomonas campestris pv. campestris (strain 8004), this protein is Imidazole glycerol phosphate synthase subunit HisF.